Consider the following 255-residue polypeptide: Putative enoyl-CoA hydratase/isomerase YhaR (255 aa).

2 helical membrane passes run 96–116 (VTIA…ALCA) and 126–146 (VLAM…HYLL).

Belongs to the enoyl-CoA hydratase/isomerase family.

The protein localises to the cell membrane. The protein is Putative enoyl-CoA hydratase/isomerase YhaR (yhaR) of Bacillus subtilis (strain 168).